Here is a 292-residue protein sequence, read N- to C-terminus: Ribosomal protein L11 methyltransferase (292 aa).

Residues Thr144, Gly165, Asp187, and Asn229 each coordinate S-adenosyl-L-methionine.

The protein belongs to the methyltransferase superfamily. PrmA family.

The protein localises to the cytoplasm. The catalysed reaction is L-lysyl-[protein] + 3 S-adenosyl-L-methionine = N(6),N(6),N(6)-trimethyl-L-lysyl-[protein] + 3 S-adenosyl-L-homocysteine + 3 H(+). Its function is as follows. Methylates ribosomal protein L11. This chain is Ribosomal protein L11 methyltransferase, found in Pseudomonas fluorescens (strain SBW25).